The primary structure comprises 173 residues: MTYIVSLFLLGLVLGLVAVASNPAPYFAALGLVVAAGVGCGVLVGYGGSFLSLVLFLIYLGGMLVVFAYSAALAAEPFPESWGDRSVLGYVVVYTVGVMLVAGWFWSGWYETSWVVVDEFKEFSVLRGDTSGVALMYSYGGGMLIVCAWVLLLTLFVVLELTRGLSRGALRAV.

Helical transmembrane passes span 1–21, 27–47, 53–73, 86–106, and 139–159; these read MTYI…AVAS, FAAL…VGYG, LVLF…SAAL, SVLG…GWFW, and YGGG…FVVL.

This sequence belongs to the complex I subunit 6 family.

The protein localises to the mitochondrion membrane. The catalysed reaction is a ubiquinone + NADH + 5 H(+)(in) = a ubiquinol + NAD(+) + 4 H(+)(out). Its function is as follows. Core subunit of the mitochondrial membrane respiratory chain NADH dehydrogenase (Complex I) that is believed to belong to the minimal assembly required for catalysis. Complex I functions in the transfer of electrons from NADH to the respiratory chain. The immediate electron acceptor for the enzyme is believed to be ubiquinone. The polypeptide is NADH-ubiquinone oxidoreductase chain 6 (MT-ND6) (Salmo salar (Atlantic salmon)).